Reading from the N-terminus, the 413-residue chain is Docking protein 2 (413 aa).

In terms of domain architecture, PH spans 4–114; the sequence is VVVKQGFLYL…WIQAICLLAF (111 aa). The IRS-type PTB domain occupies 147-252; that stretch reads PQKEFAVTVR…SAQKNAAPPG (106 aa). The interval 247 to 292 is disordered; sequence NAAPPGPQTQPVPVPAVLPRPESPYARPHDSLPPPSPTVPVPTPRQ. Residues 250-268 show a composition bias toward pro residues; the sequence is PPGPQTQPVPVPAVLPRPE. Tyrosine 271 is subject to Phosphotyrosine. Residues 277–289 are compositionally biased toward pro residues; it reads SLPPPSPTVPVPT. Phosphotyrosine occurs at positions 300 and 346. Residues 362–381 are compositionally biased toward basic and acidic residues; the sequence is QEPRGEAWRRQATADRDSSG. Positions 362–383 are disordered; the sequence is QEPRGEAWRRQATADRDSSGLK.

It belongs to the DOK family. Type A subfamily. In terms of assembly, interacts with phosphorylated RASGAP and EGFR. Interacts with RET and NCK. Interacts (via PH domain) with TEK/TIE2 (tyrosine phosphorylated). In terms of processing, on immunoreceptor stimulation, phosphorylated on C-terminal tyrosine residues. Phosphorylation on Tyr-346 is required for binding to the SH2 domain of NCK. Phosphorylation on both Tyr-271 and Tyr-300 is required for interaction with RASGAP. Phosphorylated on tyrosine residues by TEK/TIE2.

Functionally, DOK proteins are enzymatically inert adaptor or scaffolding proteins. They provide a docking platform for the assembly of multimolecular signaling complexes. DOK2 may modulate the cellular proliferation induced by IL-4, as well as IL-2 and IL-3. May be involved in modulating Bcr-Abl signaling. Attenuates EGF-stimulated MAP kinase activation. This chain is Docking protein 2 (DOK2), found in Bos taurus (Bovine).